The primary structure comprises 214 residues: Shikimate kinase (214 aa).

ATP is bound at residue 35–40; that stretch reads GAGKST. Position 39 (serine 39) interacts with Mg(2+). Substrate contacts are provided by aspartate 57, arginine 81, and glycine 103. Arginine 141 contributes to the ATP binding site. Arginine 160 contacts substrate.

Belongs to the shikimate kinase family. As to quaternary structure, monomer. It depends on Mg(2+) as a cofactor.

The protein resides in the cytoplasm. It catalyses the reaction shikimate + ATP = 3-phosphoshikimate + ADP + H(+). It functions in the pathway metabolic intermediate biosynthesis; chorismate biosynthesis; chorismate from D-erythrose 4-phosphate and phosphoenolpyruvate: step 5/7. In terms of biological role, catalyzes the specific phosphorylation of the 3-hydroxyl group of shikimic acid using ATP as a cosubstrate. The protein is Shikimate kinase of Nitrobacter winogradskyi (strain ATCC 25391 / DSM 10237 / CIP 104748 / NCIMB 11846 / Nb-255).